Here is a 398-residue protein sequence, read N- to C-terminus: Acetate kinase (398 aa).

Residue Asn7 coordinates Mg(2+). An ATP-binding site is contributed by Lys14. Arg91 contributes to the substrate binding site. Asp148 functions as the Proton donor/acceptor in the catalytic mechanism. ATP-binding positions include 208–212 (HIGNG), 283–285 (DLR), and 331–335 (GVGEN). Mg(2+) is bound at residue Glu385.

This sequence belongs to the acetokinase family. Homodimer. Mg(2+) is required as a cofactor. It depends on Mn(2+) as a cofactor.

The protein localises to the cytoplasm. It catalyses the reaction acetate + ATP = acetyl phosphate + ADP. The protein operates within metabolic intermediate biosynthesis; acetyl-CoA biosynthesis; acetyl-CoA from acetate: step 1/2. Its function is as follows. Catalyzes the formation of acetyl phosphate from acetate and ATP. Can also catalyze the reverse reaction. In Porphyromonas gingivalis (strain ATCC 33277 / DSM 20709 / CIP 103683 / JCM 12257 / NCTC 11834 / 2561), this protein is Acetate kinase.